A 310-amino-acid polypeptide reads, in one-letter code: MMDNHSSATEFHLLGFPGSQGLHHILFAIFFFFYLVTLMGNTVIIVIVCVDKRLQSPMYFFLSHLSTLEILVTTIIVPMMLWGLLFLGCRQYLSLHVSLNFSCGTMEFALLGVMAVDRYVAVCNPLRYNIIMNSSTCIWVVIVSWVFGFLSEIWPIYATFQFTFRKSNSLDHFYCDRGQLLKLSCDNTLLTEFILFLMAVFILIGSLIPTIVSYTYIISTILKIPSASGRRKAFSTFASHFTCVVIGYGSCLFLYVKPKQTQGVEYNKIVSLLVSVLTPFLNPFIFTLRNDKVKEALRDGMKRCCQLLKD.

At 1-24 the chain is on the extracellular side; sequence MMDNHSSATEFHLLGFPGSQGLHH. N-linked (GlcNAc...) asparagine glycosylation occurs at Asn4. Residues 25 to 45 form a helical membrane-spanning segment; it reads ILFAIFFFFYLVTLMGNTVII. Residues 46–53 are Cytoplasmic-facing; the sequence is VIVCVDKR. The helical transmembrane segment at 54–74 threads the bilayer; that stretch reads LQSPMYFFLSHLSTLEILVTT. Residues 75 to 98 are Extracellular-facing; it reads IIVPMMLWGLLFLGCRQYLSLHVS. The Cytoplasmic portion of the chain corresponds to 117 to 135; that stretch reads DRYVAVCNPLRYNIIMNSS. The chain crosses the membrane as a helical span at residues 136 to 156; sequence TCIWVVIVSWVFGFLSEIWPI. At 157-193 the chain is on the extracellular side; that stretch reads YATFQFTFRKSNSLDHFYCDRGQLLKLSCDNTLLTEF. A helical transmembrane segment spans residues 194–213; the sequence is ILFLMAVFILIGSLIPTIVS. Residues 214–233 are Cytoplasmic-facing; the sequence is YTYIISTILKIPSASGRRKA. The helical transmembrane segment at 234 to 254 threads the bilayer; that stretch reads FSTFASHFTCVVIGYGSCLFL. Residues 255–267 are Extracellular-facing; it reads YVKPKQTQGVEYN. A helical membrane pass occupies residues 268-288; the sequence is KIVSLLVSVLTPFLNPFIFTL. The Cytoplasmic segment spans residues 289 to 310; that stretch reads RNDKVKEALRDGMKRCCQLLKD.

Belongs to the G-protein coupled receptor 1 family.

The protein localises to the cell membrane. Odorant receptor. This Homo sapiens (Human) protein is Olfactory receptor 9A2 (OR9A2).